We begin with the raw amino-acid sequence, 249 residues long: MEMKQINETTLKIMITMEDLEEHGMELKDFLIPQEKTEEFFYTVMDELDLPDNFKNSGMLSFRVTPRKDRVDVFVTKSDLKEALDFNDLSDMEDYSGLSPEEFLKALEDNFMDKGDIEAHHKLEEHDKTLKEVDETMTEPAKEVAEETIREDYTHYVLAFSDFDQVVTFAQGLKNVSVEGSEFYKLGDVYYMTILLYLADEPDYYANNMYARFLEYANVADRTRPYLQEHATILMEEDALPVLQATKWS.

Belongs to the MecA family. Homodimer.

Functionally, enables the recognition and targeting of unfolded and aggregated proteins to the ClpC protease or to other proteins involved in proteolysis. This Streptococcus thermophilus (strain ATCC BAA-250 / LMG 18311) protein is Adapter protein MecA.